A 365-amino-acid polypeptide reads, in one-letter code: Putative agmatine deiminase (365 aa).

The Amidino-cysteine intermediate role is filled by Cys357.

Belongs to the agmatine deiminase family.

It carries out the reaction agmatine + H2O = N-carbamoylputrescine + NH4(+). The polypeptide is Putative agmatine deiminase (Yersinia pseudotuberculosis serotype O:1b (strain IP 31758)).